Consider the following 68-residue polypeptide: Large ribosomal subunit protein uL29 (68 aa).

This sequence belongs to the universal ribosomal protein uL29 family.

The sequence is that of Large ribosomal subunit protein uL29 from Erythrobacter litoralis (strain HTCC2594).